The sequence spans 346 residues: Probable disease resistance protein At5g45440 (346 aa).

An NB-ARC domain is found at 38-116 (KQVEDRVETD…AYAPRIWVSM (79 aa)). 85–92 (GEYGVGKT) provides a ligand contact to ATP. The segment at 315–346 (FDDGKANQNGSKDGKTDSVDNPNSEESKTKPL) is disordered.

Its function is as follows. Possible disease resistance protein. This Arabidopsis thaliana (Mouse-ear cress) protein is Probable disease resistance protein At5g45440.